The following is a 339-amino-acid chain: Putative ABC transporter ATP-binding protein MG467 homolog (339 aa).

Positions 41 to 87 (KKTKKAKPAKVKKVKEPKAKAVKPEQVKPTKTTKAPKPKKPKKQGGL) are disordered. Residues 42 to 53 (KTKKAKPAKVKK) show a composition bias toward basic residues. The span at 54–68 (VKEPKAKAVKPEQVK) shows a compositional bias: basic and acidic residues. Residues 74 to 83 (KAPKPKKPKK) are compositionally biased toward basic residues. Residues 112–338 (ISIDKMWKHV…IVSNELVRPL (227 aa)) form the ABC transporter domain. ATP is bound at residue 150–157 (GPSGSGKT).

This sequence belongs to the ABC transporter superfamily.

The chain is Putative ABC transporter ATP-binding protein MG467 homolog from Mycoplasma pneumoniae (strain ATCC 29342 / M129 / Subtype 1) (Mycoplasmoides pneumoniae).